The primary structure comprises 262 residues: Small ribosomal subunit protein eS4y (262 aa).

Residues 42–104 (LPLVLIIRNR…TNENFRLLYD (63 aa)) enclose the S4 RNA-binding domain.

It belongs to the eukaryotic ribosomal protein eS4 family.

It is found in the cytoplasm. This Arabidopsis thaliana (Mouse-ear cress) protein is Small ribosomal subunit protein eS4y (RPS4B).